We begin with the raw amino-acid sequence, 134 residues long: Ribonuclease VapC (134 aa).

Positions 4-124 constitute a PINc domain; sequence IVDTSIIIAL…NTKDFKRIPE (121 aa). Residue aspartate 6 coordinates Mg(2+).

Belongs to the PINc/VapC protein family. It depends on Mg(2+) as a cofactor.

Toxic component of a type II toxin-antitoxin (TA) system. Has ssRNase activity. Its RNase activity is partially neutralized by cognate antitoxin VapB. Rapidly induces apoptosis upon microinjection into mouse fibroblasts (L929 line). Probably contributes to host cell death if bacterial cell lysis occurs during host infection. The sequence is that of Ribonuclease VapC from Rickettsia bellii (strain RML369-C).